A 510-amino-acid polypeptide reads, in one-letter code: RanBP-type and C3HC4-type zinc finger-containing protein 1 (510 aa).

Met1 carries the post-translational modification N-acetylmethionine. Residues 1–220 (MDEKTKKAEE…PGCEMCCRAR (220 aa)) are interaction with IRF3. The segment at 1–270 (MDEKTKKAEE…NYLQHVQLDQ (270 aa)) is interaction with TAB2. Ser50 carries the phosphoserine modification. The Ubiquitin-like domain occupies 55–119 (IRLWVSVEDA…DQETLHSHGV (65 aa)). Residues 69–131 (VTIWLTVRPD…NGDSAYLYLL (63 aa)) are interaction with RNF31. The interval 160–192 (LTLQPRGPLEPGPPKPGVPQEPGRGQPDAVPEP) is disordered. Over residues 167-178 (PLEPGPPKPGVP) the composition is skewed to pro residues. The RanBP2-type zinc finger occupies 193-222 (PPVGWQCPGCTFINKPTRPGCEMCCRARPE). The stretch at 233–261 (DEEERARLAGEEEALRQYQQRKQQQQEGN) forms a coiled coil. Residues 278–506 (EPAECPVCYS…VNGIPCHPSC (229 aa)) are TRIAD supradomain. Positions 282, 285, 300, 302, 305, 308, and 323 each coordinate Zn(2+). Residues 282 to 332 (CPVCYSVLAPGEAVVLRECLHTFCRECLQGTIRNSQEAEVSCPFIDNTYSC) form an RING-type 1 zinc finger. A Phosphotyrosine modification is found at Tyr330. Residues Cys332, Cys371, Cys376, Cys391, Cys394, Cys399, Cys402, His406, Cys411, Cys447, and Cys450 each coordinate Zn(2+). Residues 351 to 411 (QRFLDLGISI…CKAIHEQMNC (61 aa)) form an IBR-type zinc finger. The RING-type 2; atypical zinc finger occupies 447-476 (CPQCQIVVQKKDGCDWIRCTVCHTEICWVT). The active site involves Cys460. The Zn(2+) site is built by Cys465 and Cys468.

Belongs to the RBR family. As to quaternary structure, component of the LUBAC complex (linear ubiquitin chain assembly complex) which consists of SHARPIN, RBCK1 and RNF31. LUBAC has a MW of approximately 600 kDa suggesting a heteromultimeric assembly of its subunits. Interacts with beta-I-type (PRKCB1) and zeta-type protein kinase C (PRKCZ). Interacts with UBE2L3. Interacts with PRKCH. Associates with the TNF-R1 signaling complex (TNF-RSC) in a stimulation-dependent manner. Interacts with EYA1, TAB2, TAB3, MAP3K7 TRAF6 and RIPK1. Interacts with IRF3. Interacts with IREB2 only in iron-rich conditions. In terms of assembly, (Microbial infection) Interacts with hepatitis B virus/HBV protein HBx; this interaction is required to activate transcription of the viral genome. Post-translationally, auto-ubiquitinated. Auto-ubiquitination leads to degradation by the proteasome. In terms of processing, phosphorylated. In vitro, phosphorylation inhibits auto-ubiquitination activity. (Microbial infection) Ubiquitinated by S.flexneri E3 ubiquitin-protein ligases IpaH1.4 and IpaH2.5, leading to its degradation by the proteasome, thereby preventing formation of the bacterial ubiquitin coat and activation of innate immunity.

The catalysed reaction is [E2 ubiquitin-conjugating enzyme]-S-ubiquitinyl-L-cysteine + [acceptor protein]-L-lysine = [E2 ubiquitin-conjugating enzyme]-L-cysteine + [acceptor protein]-N(6)-ubiquitinyl-L-lysine.. It participates in protein modification; protein ubiquitination. E3 ubiquitin-protein ligase, which accepts ubiquitin from specific E2 ubiquitin-conjugating enzymes, such as UBE2L3/UBCM4, and then transfers it to substrates. Functions as an E3 ligase for oxidized IREB2 and both heme and oxygen are necessary for IREB2 ubiquitination. Promotes ubiquitination of TAB2 and IRF3 and their degradation by the proteasome. Component of the LUBAC complex which conjugates linear ('Met-1'-linked) polyubiquitin chains to substrates and plays a key role in NF-kappa-B activation and regulation of inflammation. LUBAC conjugates linear polyubiquitin to IKBKG and RIPK1 and is involved in activation of the canonical NF-kappa-B and the JNK signaling pathways. Linear ubiquitination mediated by the LUBAC complex interferes with TNF-induced cell death and thereby prevents inflammation. LUBAC is recruited to the TNF-R1 signaling complex (TNF-RSC) following polyubiquitination of TNF-RSC components by BIRC2 and/or BIRC3 and to conjugate linear polyubiquitin to IKBKG and possibly other components contributing to the stability of the complex. The LUBAC complex is also involved in innate immunity by conjugating linear polyubiquitin chains at the surface of bacteria invading the cytosol to form the ubiquitin coat surrounding bacteria. LUBAC is not able to initiate formation of the bacterial ubiquitin coat, and can only promote formation of linear polyubiquitins on pre-existing ubiquitin. The bacterial ubiquitin coat acts as an 'eat-me' signal for xenophagy and promotes NF-kappa-B activation. Together with OTULIN, the LUBAC complex regulates the canonical Wnt signaling during angiogenesis. Binds polyubiquitin of different linkage types. This chain is RanBP-type and C3HC4-type zinc finger-containing protein 1 (RBCK1), found in Homo sapiens (Human).